Consider the following 388-residue polypeptide: Flap endonuclease 1 (388 aa).

Residues 1 to 104 (MGILGLSKLI…GELAKRAERR (104 aa)) form an N-domain region. Asp-34 contributes to the Mg(2+) binding site. Arg-47 and Arg-70 together coordinate DNA. Residues Asp-86, Glu-158, Glu-160, Asp-179, and Asp-181 each contribute to the Mg(2+) site. The interval 122–253 (EIEKFNRRLV…KRAIELIKTY (132 aa)) is I-domain. Glu-158 contributes to the DNA binding site. DNA is bound by residues Gly-231 and Asp-233. Asp-233 contacts Mg(2+). The segment at 336–344 (TQVRLDSFF) is interaction with PCNA. Residues 351-388 (PNATAAAKRKAEEIKKSANNKKAKTSGGSGAARGRRPK) are disordered.

Belongs to the XPG/RAD2 endonuclease family. FEN1 subfamily. As to quaternary structure, interacts with PCNA. Three molecules of FEN1 bind to one PCNA trimer with each molecule binding to one PCNA monomer. PCNA stimulates the nuclease activity without altering cleavage specificity. It depends on Mg(2+) as a cofactor. Post-translationally, phosphorylated. Phosphorylation upon DNA damage induces relocalization to the nuclear plasma.

It is found in the nucleus. Its subcellular location is the nucleolus. The protein localises to the nucleoplasm. The protein resides in the mitochondrion. Its function is as follows. Structure-specific nuclease with 5'-flap endonuclease and 5'-3' exonuclease activities involved in DNA replication and repair. During DNA replication, cleaves the 5'-overhanging flap structure that is generated by displacement synthesis when DNA polymerase encounters the 5'-end of a downstream Okazaki fragment. It enters the flap from the 5'-end and then tracks to cleave the flap base, leaving a nick for ligation. Also involved in the long patch base excision repair (LP-BER) pathway, by cleaving within the apurinic/apyrimidinic (AP) site-terminated flap. Acts as a genome stabilization factor that prevents flaps from equilibrating into structures that lead to duplications and deletions. Also possesses 5'-3' exonuclease activity on nicked or gapped double-stranded DNA, and exhibits RNase H activity. Also involved in replication and repair of rDNA and in repairing mitochondrial DNA. This chain is Flap endonuclease 1, found in Drosophila mojavensis (Fruit fly).